A 170-amino-acid chain; its full sequence is MVETTQHFVSIESSNRPDPANTTPANYSIQLPQRYRNIWSAMLVNIALPAVSPPQKYVYLDIDKLNSIDSTSPSGGVNFALAKIPLSIAGTGNVFFADTMTSSFPNVPLQNPVATMDKLNIKLKDANGNVLTIPAGNEHSFMIQLTCGDYIPRGGGSTITQNGRVLGGTR.

Residues 1–25 form a disordered region; the sequence is MVETTQHFVSIESSNRPDPANTTPA. 4 N-linked (Glc...) asparagine; by host glycosylation sites follow: Asn-21, Asn-93, Asn-129, and Asn-137.

Glycosylated. The pattern of glycosylation sites are unusual.

It localises to the virion. Constitutes the 12 pentameric capsomers positioned at the 5-fold vertices of the outer capsid shell. One of the vertex is composed of a variant of P1 (type II pentameric capsomer) and has thereby a structure slightly different from the other verteces (type I pentameric capsomers). This Paramecium bursaria Chlorella virus 1 (PBCV-1) protein is Penton capsid protein P1.